The chain runs to 41 residues: Large ribosomal subunit protein bL36 (41 aa).

The protein belongs to the bacterial ribosomal protein bL36 family.

In Novosphingobium aromaticivorans (strain ATCC 700278 / DSM 12444 / CCUG 56034 / CIP 105152 / NBRC 16084 / F199), this protein is Large ribosomal subunit protein bL36.